Consider the following 673-residue polypeptide: Methionine--tRNA ligase (673 aa).

The short motif at 14-24 (YYPSGKLHIGN) is the 'HIGH' region element. Positions 310-314 (KMSKS) match the 'KMSKS' region motif. Lysine 313 serves as a coordination point for ATP. The tRNA-binding domain occupies 571–673 (VFDKVELKVA…SEAPNGSSIS (103 aa)).

Belongs to the class-I aminoacyl-tRNA synthetase family. MetG type 2B subfamily. As to quaternary structure, homodimer.

It is found in the cytoplasm. It catalyses the reaction tRNA(Met) + L-methionine + ATP = L-methionyl-tRNA(Met) + AMP + diphosphate. Functionally, is required not only for elongation of protein synthesis but also for the initiation of all mRNA translation through initiator tRNA(fMet) aminoacylation. The sequence is that of Methionine--tRNA ligase (metG) from Oceanobacillus iheyensis (strain DSM 14371 / CIP 107618 / JCM 11309 / KCTC 3954 / HTE831).